The chain runs to 270 residues: Phthiotriol/phenolphthiotriol dimycocerosates methyltransferase (270 aa).

It belongs to the methyltransferase superfamily. Phthiotriol/phenolphthiotriol dimycocerosates methyltransferase family.

Its function is as follows. Catalyzes the methylation of the lipid moiety of the intermediate compounds phthiotriol and glycosylated phenolphthiotriol dimycoserosates to form phthiocerol dimycocerosates (DIM A) and glycosylated phenolphthiocerol dimycocerosates (PGL). The chain is Phthiotriol/phenolphthiotriol dimycocerosates methyltransferase from Mycobacterium leprae (strain TN).